We begin with the raw amino-acid sequence, 227 residues long: MRCLKAVVAFFTALPVGGAELDFSCIWATPYLAGLMVGGAGGAVYFLTHSPAAAYAALLLATGLHHLDGLADVGDALMVRDRERARRVLEDPRRGVGGIFAVVALFVLAASARPESWLDYIVTDLYSKALALVVAAYSKPFKEGLGSLFIVSAKRQWPAALPALAVAAWLHPAAFLAATVLSLFFYVAAYKHLGGANGDLLGALLEVTRALYLATVDLSTSLINGLF.

The next 5 helical transmembrane spans lie at 3-23, 26-46, 95-115, 117-137, and 165-185; these read CLKA…ELDF, IWAT…AVYF, GVGG…ARPE, WLDY…VAAY, and AVAA…SLFF.

This sequence belongs to the CobS family. Mg(2+) serves as cofactor.

The protein resides in the cell membrane. The catalysed reaction is alpha-ribazole + adenosylcob(III)inamide-GDP = adenosylcob(III)alamin + GMP + H(+). The enzyme catalyses alpha-ribazole 5'-phosphate + adenosylcob(III)inamide-GDP = adenosylcob(III)alamin 5'-phosphate + GMP + H(+). It participates in cofactor biosynthesis; adenosylcobalamin biosynthesis; adenosylcobalamin from cob(II)yrinate a,c-diamide: step 7/7. Functionally, joins adenosylcobinamide-GDP and alpha-ribazole to generate adenosylcobalamin (Ado-cobalamin). Also synthesizes adenosylcobalamin 5'-phosphate from adenosylcobinamide-GDP and alpha-ribazole 5'-phosphate. This chain is Adenosylcobinamide-GDP ribazoletransferase, found in Pyrobaculum islandicum (strain DSM 4184 / JCM 9189 / GEO3).